The chain runs to 43 residues: Photosystem I reaction center subunit IX (43 aa).

Residues 7–27 traverse the membrane as a helical segment; it reads YLSVAPVLSALWFGALAGLLI.

It belongs to the PsaJ family.

The protein localises to the plastid. It localises to the chloroplast thylakoid membrane. May help in the organization of the PsaE and PsaF subunits. The polypeptide is Photosystem I reaction center subunit IX (Oenothera argillicola (Appalachian evening primrose)).